Consider the following 471-residue polypeptide: Putative multidrug resistance protein MdtD (471 aa).

At methionine 1 to glutamine 11 the chain is on the periplasmic side. A helical transmembrane segment spans residues leucine 12–alanine 32. Over leucine 33 to histidine 48 the chain is Cytoplasmic. A helical membrane pass occupies residues methionine 49–alanine 69. Over aspartate 70 to asparagine 76 the chain is Periplasmic. A helical membrane pass occupies residues isoleucine 77 to threonine 97. The Cytoplasmic portion of the chain corresponds to leucine 98–leucine 101. Residues leucine 102–methionine 124 form a helical membrane-spanning segment. The Periplasmic segment spans residues lysine 125–threonine 137. The chain crosses the membrane as a helical span at residues phenylalanine 138 to valine 158. Residues glutamate 159–histidine 164 are Cytoplasmic-facing. The chain crosses the membrane as a helical span at residues tryptophan 165–methionine 185. The Periplasmic portion of the chain corresponds to proline 186–aspartate 196. Residues leucine 197 to serine 217 form a helical membrane-spanning segment. Over lysine 218–proline 224 the chain is Cytoplasmic. Residues leucine 225 to alanine 245 traverse the membrane as a helical segment. Residues arginine 246–threonine 262 are Periplasmic-facing. A helical membrane pass occupies residues phenylalanine 263–methionine 283. Topologically, residues threonine 284–proline 285 are cytoplasmic. The chain crosses the membrane as a helical span at residues valine 286–methionine 306. Topologically, residues valine 307–threonine 341 are periplasmic. The chain crosses the membrane as a helical span at residues leucine 342–leucine 362. The Cytoplasmic portion of the chain corresponds to glutamine 363–serine 395. The chain crosses the membrane as a helical span at residues methionine 396–phenylalanine 416. Residues glycine 417–threonine 430 lie on the Periplasmic side of the membrane. A helical membrane pass occupies residues valine 431–alanine 451. Over arginine 452 to glutamine 471 the chain is Cytoplasmic.

The protein belongs to the major facilitator superfamily. TCR/Tet family.

It is found in the cell inner membrane. In Escherichia coli O8 (strain IAI1), this protein is Putative multidrug resistance protein MdtD.